The primary structure comprises 104 residues: MTNRLVLSGTVCRTPLRKVSPSGIPHCQFVLEHRSVQEEAGFHRQAWCQMPVIVSGHENQAITHSITVGSSITVQGFISCYKAKNGLSKMVLHAEQIELIDSGD.

The SSB domain occupies Met-1–Asp-101.

It belongs to the PriB family. In terms of assembly, homodimer. Interacts with PriA and DnaT. Component of the replication restart primosome. Primosome assembly occurs via a 'hand-off' mechanism. PriA binds to replication forks, subsequently PriB then DnaT bind; DnaT then displaces ssDNA to generate the helicase loading substrate.

Functionally, involved in the restart of stalled replication forks, which reloads the replicative helicase on sites other than the origin of replication; the PriA-PriB pathway is the major replication restart pathway. During primosome assembly it facilitates complex formation between PriA and DnaT on DNA; stabilizes PriA on DNA. Stimulates the DNA unwinding activity of PriA helicase. In Shigella dysenteriae serotype 1 (strain Sd197), this protein is Replication restart protein PriB.